The sequence spans 545 residues: CTP synthase (545 aa).

Positions 1 to 266 are amidoligase domain; sequence MTTRYIFVTG…DDLVVKRFGL (266 aa). A CTP-binding site is contributed by S14. Residue S14 coordinates UTP. Residues 15–20 and D72 contribute to the ATP site; that span reads SLGKGI. Mg(2+)-binding residues include D72 and E140. CTP-binding positions include 147 to 149, 187 to 192, and K223; these read DIE and KTKPTQ. UTP-binding positions include 187 to 192 and K223; that span reads KTKPTQ. Position 239–241 (239–241) interacts with ATP; the sequence is KDV. One can recognise a Glutamine amidotransferase type-1 domain in the interval 291-542; it reads VIGMVGKYIE…IAAASAHQKR (252 aa). G352 provides a ligand contact to L-glutamine. The Nucleophile; for glutamine hydrolysis role is filled by C379. L-glutamine contacts are provided by residues 380–383, E403, and R470; that span reads LGMQ. Catalysis depends on residues H515 and E517.

The protein belongs to the CTP synthase family. As to quaternary structure, homotetramer.

It carries out the reaction UTP + L-glutamine + ATP + H2O = CTP + L-glutamate + ADP + phosphate + 2 H(+). It catalyses the reaction L-glutamine + H2O = L-glutamate + NH4(+). The catalysed reaction is UTP + NH4(+) + ATP = CTP + ADP + phosphate + 2 H(+). It functions in the pathway pyrimidine metabolism; CTP biosynthesis via de novo pathway; CTP from UDP: step 2/2. Allosterically activated by GTP, when glutamine is the substrate; GTP has no effect on the reaction when ammonia is the substrate. The allosteric effector GTP functions by stabilizing the protein conformation that binds the tetrahedral intermediate(s) formed during glutamine hydrolysis. Inhibited by the product CTP, via allosteric rather than competitive inhibition. In terms of biological role, catalyzes the ATP-dependent amination of UTP to CTP with either L-glutamine or ammonia as the source of nitrogen. Regulates intracellular CTP levels through interactions with the four ribonucleotide triphosphates. The chain is CTP synthase from Shewanella putrefaciens (strain CN-32 / ATCC BAA-453).